Here is a 323-residue protein sequence, read N- to C-terminus: Dihydrodiol dehydrogenase 3 (323 aa).

Residues 20–24 and D50 contribute to the NADP(+) site; that span reads GFGTF. Y55 (proton donor) is an active-site residue. Substrate is bound at residue H117. Residues 166–167, Q190, 216–221, and 270–280 each bind NADP(+); these read SN, YGALGS, and KSYNKKRIKEN.

Belongs to the aldo/keto reductase family.

Its subcellular location is the cytoplasm. The polypeptide is Dihydrodiol dehydrogenase 3 (Bos taurus (Bovine)).